The sequence spans 72 residues: Disintegrin sasaimin (72 aa).

The Disintegrin domain maps to 1–72 (EAGEECDCGA…SAGCPRNPFH (72 aa)). 6 cysteine pairs are disulfide-bonded: Cys-6-Cys-21, Cys-8-Cys-16, Cys-15-Cys-38, Cys-29-Cys-35, Cys-34-Cys-59, and Cys-47-Cys-66. Positions 51 to 53 (RGD) match the Cell attachment site motif.

It belongs to the venom metalloproteinase (M12B) family. P-II subfamily. P-IIa sub-subfamily. Monomer. As to expression, expressed by the venom gland.

The protein resides in the secreted. In terms of biological role, inhibits ADP- (IC(50)=66 nM) and collagen-induced (IC(50)=100 nM) aggregation of human platelets. In vitro, inhibits adhesion of endothelial cells to vitronectin, type-I collagen and, to a lower degree, fibronectin and laminin. In Cerrophidion sasai (Costa Rica montane pitviper), this protein is Disintegrin sasaimin.